We begin with the raw amino-acid sequence, 136 residues long: MQNAEIFYKACKNAFTRKEYIFPSGRKEFVLGYEDKCLDCLLEIYCEDDIIVDPRLIPTFKYEKLRDDGTIYSAKYFPDVLIVNDHGNYFIEVKSEWTYKIDTVNIHKKIKSVTESGYDIELWIYNSKKNSKKRTF.

This is an uncharacterized protein from Acheta domesticus (House cricket).